Consider the following 46-residue polypeptide: Light-harvesting protein B800/850/890 alpha-1 chain (46 aa).

The Cytoplasmic segment spans residues 1–12 (MWRLWKLYDPRR). The helical transmembrane segment at 13–33 (VLIGIFSWLAVLALVIHFILL) threads the bilayer. An a bacteriochlorophyll-binding site is contributed by H29. Topologically, residues 34-46 (STDRFNWVGGAAN) are periplasmic.

The protein belongs to the antenna complex alpha subunit family. The core complex is formed by different alpha and beta chains, binding bacteriochlorophyll molecules, and arranged most probably in tetrameric structures disposed around the reaction center. The non-pigmented gamma chains may constitute additional components.

It is found in the cell inner membrane. In terms of biological role, antenna complexes are light-harvesting systems, which transfer the excitation energy to the reaction centers. The sequence is that of Light-harvesting protein B800/850/890 alpha-1 chain from Halorhodospira halophila (strain DSM 244 / SL1) (Ectothiorhodospira halophila (strain DSM 244 / SL1)).